Reading from the N-terminus, the 182-residue chain is Pyruvoyl-dependent arginine decarboxylase (182 aa).

Ser44 carries the post-translational modification Pyruvic acid (Ser).

This sequence belongs to the PdaD family. Requires pyruvate as cofactor.

The enzyme catalyses L-arginine + H(+) = agmatine + CO2. In Picrophilus torridus (strain ATCC 700027 / DSM 9790 / JCM 10055 / NBRC 100828 / KAW 2/3), this protein is Pyruvoyl-dependent arginine decarboxylase.